The sequence spans 193 residues: Flagellin B1 (193 aa).

A propeptide spanning residues 1–12 is cleaved from the precursor; it reads MFEFITDEDERG.

The protein belongs to the archaeal flagellin family. Post-translationally, glycosylated.

It localises to the archaeal flagellum. Its function is as follows. Flagellin is the subunit protein which polymerizes to form the filaments of archaeal flagella. The protein is Flagellin B1 (flaB1) of Halobacterium salinarum (strain ATCC 700922 / JCM 11081 / NRC-1) (Halobacterium halobium).